A 321-amino-acid polypeptide reads, in one-letter code: UDP-N-acetylenolpyruvoylglucosamine reductase (321 aa).

An FAD-binding PCMH-type domain is found at 39-205; the sequence is RTGGLAELFY…TAALLEGEPG (167 aa). Residue Arg185 is part of the active site. Ser234 functions as the Proton donor in the catalytic mechanism. Residue Glu304 is part of the active site.

This sequence belongs to the MurB family. FAD serves as cofactor.

Its subcellular location is the cytoplasm. The catalysed reaction is UDP-N-acetyl-alpha-D-muramate + NADP(+) = UDP-N-acetyl-3-O-(1-carboxyvinyl)-alpha-D-glucosamine + NADPH + H(+). It functions in the pathway cell wall biogenesis; peptidoglycan biosynthesis. Functionally, cell wall formation. This chain is UDP-N-acetylenolpyruvoylglucosamine reductase, found in Bartonella quintana (strain Toulouse) (Rochalimaea quintana).